A 359-amino-acid polypeptide reads, in one-letter code: Histidinol-phosphate aminotransferase (359 aa).

At K217 the chain carries N6-(pyridoxal phosphate)lysine.

The protein belongs to the class-II pyridoxal-phosphate-dependent aminotransferase family. Histidinol-phosphate aminotransferase subfamily. As to quaternary structure, homodimer. The cofactor is pyridoxal 5'-phosphate.

It catalyses the reaction L-histidinol phosphate + 2-oxoglutarate = 3-(imidazol-4-yl)-2-oxopropyl phosphate + L-glutamate. The protein operates within amino-acid biosynthesis; L-histidine biosynthesis; L-histidine from 5-phospho-alpha-D-ribose 1-diphosphate: step 7/9. The polypeptide is Histidinol-phosphate aminotransferase (Salmonella heidelberg (strain SL476)).